A 55-amino-acid chain; its full sequence is Large ribosomal subunit protein bL33 (55 aa).

The protein belongs to the bacterial ribosomal protein bL33 family.

The sequence is that of Large ribosomal subunit protein bL33 from Escherichia coli (strain K12 / DH10B).